A 276-amino-acid chain; its full sequence is NAC domain-containing protein 67 (276 aa).

Positions 17-170 (LPPGFRFHPT…DWVLCRLYNK (154 aa)) constitute an NAC domain.

Expressed in leaf blades.

The protein resides in the nucleus. Probable transcription factor involved in stress response. This is NAC domain-containing protein 67 from Oryza sativa subsp. japonica (Rice).